Consider the following 350-residue polypeptide: Methionine import ATP-binding protein MetN (350 aa).

An ABC transporter domain is found at 2–241 (IQIKNLKKEY…PQAPVTRSFV (240 aa)). 38–45 (GHSGAGKS) is a binding site for ATP.

This sequence belongs to the ABC transporter superfamily. Methionine importer (TC 3.A.1.24) family. In terms of assembly, the complex is composed of two ATP-binding proteins (MetN), two transmembrane proteins (MetI) and a solute-binding protein (MetQ).

The protein localises to the cell inner membrane. The catalysed reaction is L-methionine(out) + ATP + H2O = L-methionine(in) + ADP + phosphate + H(+). It catalyses the reaction D-methionine(out) + ATP + H2O = D-methionine(in) + ADP + phosphate + H(+). Functionally, part of the ABC transporter complex MetNIQ involved in methionine import. Responsible for energy coupling to the transport system. This is Methionine import ATP-binding protein MetN from Francisella tularensis subsp. tularensis (strain SCHU S4 / Schu 4).